Reading from the N-terminus, the 273-residue chain is 5-deoxy-glucuronate isomerase (273 aa).

It belongs to the isomerase IolB family.

It carries out the reaction 5-deoxy-D-glucuronate = 5-dehydro-2-deoxy-D-gluconate. The protein operates within polyol metabolism; myo-inositol degradation into acetyl-CoA; acetyl-CoA from myo-inositol: step 4/7. Involved in the isomerization of 5-deoxy-glucuronate (5DG) to 5-dehydro-2-deoxy-D-gluconate (DKG or 2-deoxy-5-keto-D-gluconate). The sequence is that of 5-deoxy-glucuronate isomerase from Listeria monocytogenes serotype 4b (strain CLIP80459).